Reading from the N-terminus, the 125-residue chain is Holo-[acyl-carrier-protein] synthase (125 aa).

Mg(2+) contacts are provided by Asp8 and Glu57.

It belongs to the P-Pant transferase superfamily. AcpS family. The cofactor is Mg(2+).

The protein resides in the cytoplasm. It carries out the reaction apo-[ACP] + CoA = holo-[ACP] + adenosine 3',5'-bisphosphate + H(+). Its function is as follows. Transfers the 4'-phosphopantetheine moiety from coenzyme A to a Ser of acyl-carrier-protein. In Neisseria gonorrhoeae (strain ATCC 700825 / FA 1090), this protein is Holo-[acyl-carrier-protein] synthase.